The following is a 494-amino-acid chain: Glutamyl-tRNA(Gln) amidotransferase subunit A (494 aa).

Catalysis depends on charge relay system residues K79 and S159. Residue S183 is the Acyl-ester intermediate of the active site.

It belongs to the amidase family. GatA subfamily. In terms of assembly, heterotrimer of A, B and C subunits.

It carries out the reaction L-glutamyl-tRNA(Gln) + L-glutamine + ATP + H2O = L-glutaminyl-tRNA(Gln) + L-glutamate + ADP + phosphate + H(+). Functionally, allows the formation of correctly charged Gln-tRNA(Gln) through the transamidation of misacylated Glu-tRNA(Gln) in organisms which lack glutaminyl-tRNA synthetase. The reaction takes place in the presence of glutamine and ATP through an activated gamma-phospho-Glu-tRNA(Gln). The chain is Glutamyl-tRNA(Gln) amidotransferase subunit A from Bartonella tribocorum (strain CIP 105476 / IBS 506).